The following is a 274-amino-acid chain: MTFIDMLRGATARNDSLLCVGLDPEPSRFPAGLRGDAGRIYDFCAAIVDATADLACAFKPQIAYFAAHRAEEQLERLMRHMRATAPHVPVILDAKRGDIGSTAQQYAIEAFERYGADAVTLSPFMGFDSIEPYLAYHGKGAFLLCRTSNPGGDDLQSQRLASVDGQPLLFEHIARQAQGPWNRNGQLGLVVGATYPAEIERVRALAPTLPLLIPGVGAQGGDAAATVRAGLRPDGPVVVNSSRAILYASADEGFAAAARQAAQATRDALNAARG.

K95 functions as the Proton donor in the catalytic mechanism.

It belongs to the OMP decarboxylase family. Type 2 subfamily.

The catalysed reaction is orotidine 5'-phosphate + H(+) = UMP + CO2. Its pathway is pyrimidine metabolism; UMP biosynthesis via de novo pathway; UMP from orotate: step 2/2. In Paracidovorax citrulli (strain AAC00-1) (Acidovorax citrulli), this protein is Orotidine 5'-phosphate decarboxylase.